Here is a 157-residue protein sequence, read N- to C-terminus: uncharacterized protein (157 aa).

An N-acetyltransferase domain is found at 9–146 (LLINYKTLDE…GDFYVWHPET (138 aa)).

This is an uncharacterized protein from Bacillus cereus (strain AH187).